A 499-amino-acid chain; its full sequence is Lysine--tRNA ligase (499 aa).

The Mg(2+) site is built by E408 and E415.

It belongs to the class-II aminoacyl-tRNA synthetase family. In terms of assembly, homodimer. Requires Mg(2+) as cofactor.

The protein resides in the cytoplasm. The enzyme catalyses tRNA(Lys) + L-lysine + ATP = L-lysyl-tRNA(Lys) + AMP + diphosphate. In Bacillus cereus (strain AH820), this protein is Lysine--tRNA ligase.